We begin with the raw amino-acid sequence, 243 residues long: Isoprenyl transferase 2 (243 aa).

The active site involves aspartate 23. Aspartate 23 lines the Mg(2+) pocket. Substrate-binding positions include 24 to 27, tryptophan 28, arginine 36, histidine 40, and 68 to 70; these read GNGR and STE. Asparagine 71 serves as the catalytic Proton acceptor. Residues tryptophan 72, arginine 74, arginine 191, and 197–199 contribute to the substrate site; that span reads RTS. Mg(2+) is bound at residue glutamate 210.

Belongs to the UPP synthase family. As to quaternary structure, homodimer. Mg(2+) serves as cofactor.

In terms of biological role, catalyzes the condensation of isopentenyl diphosphate (IPP) with allylic pyrophosphates generating different type of terpenoids. This chain is Isoprenyl transferase 2, found in Corynebacterium glutamicum (strain ATCC 13032 / DSM 20300 / JCM 1318 / BCRC 11384 / CCUG 27702 / LMG 3730 / NBRC 12168 / NCIMB 10025 / NRRL B-2784 / 534).